The primary structure comprises 246 residues: MEPNTVIPKYNVRGFEIWGFRDMAQVLDHLLGSGPVKTGTLVAMNAEKLLKAEDDTALCELIKNAEYLYADGISMVRAIRRKYPQAELSRVAGADLWEALMQRAGQQGTPVFLVGGKPDVLAETEAKLRAQWNVNLVGSQDGYFTPEQREALFARIAASGAAIVTVAMGSPKQEIFMRDCRKFYPDALYMGVGGTYDVFTSHVKRAPKIWQNMGLEWLYRLLAQPSRIRRQLKLLKFVGYYYSGRL.

It belongs to the glycosyltransferase 26 family.

It carries out the reaction UDP-N-acetyl-alpha-D-mannosaminouronate + N-acetyl-alpha-D-glucosaminyl-di-trans,octa-cis-undecaprenyl diphosphate = beta-D-ManNAcA-(1-&gt;4)-alpha-D-GlcNAc-di-trans,octa-cis-undecaprenyl diphosphate + UDP + H(+). It functions in the pathway bacterial outer membrane biogenesis; enterobacterial common antigen biosynthesis. Catalyzes the synthesis of Und-PP-GlcNAc-ManNAcA (Lipid II), the second lipid-linked intermediate involved in enterobacterial common antigen (ECA) synthesis. The sequence is that of UDP-N-acetyl-D-mannosaminuronic acid transferase from Yersinia pestis bv. Antiqua (strain Antiqua).